Here is a 555-residue protein sequence, read N- to C-terminus: CTP synthase (555 aa).

The amidoligase domain stretch occupies residues 1–271 (MVKRGKKTKY…DDKLAELFNI (271 aa)). Position 19 (S19) interacts with CTP. S19 is a UTP binding site. Residues 20-25 (SLGKGL) and D77 each bind ATP. Mg(2+) contacts are provided by D77 and E145. CTP contacts are provided by residues 152 to 154 (DIE), 192 to 197 (KTKPTQ), and K228. UTP contacts are provided by residues 192 to 197 (KTKPTQ) and K228. In terms of domain architecture, Glutamine amidotransferase type-1 spans 297 to 538 (RVGVVGKYVE…VHAAREQRDQ (242 aa)). G358 lines the L-glutamine pocket. C385 functions as the Nucleophile; for glutamine hydrolysis in the catalytic mechanism. L-glutamine contacts are provided by residues 386–389 (LGLQ), E409, and R466. Active-site residues include H511 and E513.

This sequence belongs to the CTP synthase family. Homotetramer.

It carries out the reaction UTP + L-glutamine + ATP + H2O = CTP + L-glutamate + ADP + phosphate + 2 H(+). The enzyme catalyses L-glutamine + H2O = L-glutamate + NH4(+). It catalyses the reaction UTP + NH4(+) + ATP = CTP + ADP + phosphate + 2 H(+). It participates in pyrimidine metabolism; CTP biosynthesis via de novo pathway; CTP from UDP: step 2/2. Allosterically activated by GTP, when glutamine is the substrate; GTP has no effect on the reaction when ammonia is the substrate. The allosteric effector GTP functions by stabilizing the protein conformation that binds the tetrahedral intermediate(s) formed during glutamine hydrolysis. Inhibited by the product CTP, via allosteric rather than competitive inhibition. Its function is as follows. Catalyzes the ATP-dependent amination of UTP to CTP with either L-glutamine or ammonia as the source of nitrogen. Regulates intracellular CTP levels through interactions with the four ribonucleotide triphosphates. In Anaeromyxobacter sp. (strain Fw109-5), this protein is CTP synthase.